The primary structure comprises 402 residues: Lipid-A-disaccharide synthase (402 aa).

This sequence belongs to the LpxB family.

It carries out the reaction a lipid X + a UDP-2-N,3-O-bis[(3R)-3-hydroxyacyl]-alpha-D-glucosamine = a lipid A disaccharide + UDP + H(+). It participates in bacterial outer membrane biogenesis; LPS lipid A biosynthesis. Functionally, condensation of UDP-2,3-diacylglucosamine and 2,3-diacylglucosamine-1-phosphate to form lipid A disaccharide, a precursor of lipid A, a phosphorylated glycolipid that anchors the lipopolysaccharide to the outer membrane of the cell. This chain is Lipid-A-disaccharide synthase, found in Cupriavidus pinatubonensis (strain JMP 134 / LMG 1197) (Cupriavidus necator (strain JMP 134)).